Here is a 652-residue protein sequence, read N- to C-terminus: MKERMSELVELLNRYAHEYYTADRPSVSDSEYDRLYRELAELEEKYPTDILPDSPTHRVGGKILEGFEKYPHQYPLFSLQDAFSREELLAFDQRVRKEFPQVSYLCELKIDGLSISLTYENGILVAGATRGDGSVGENITENLKRVKDIPLTLKEPLDITVRGECYMPKASFDAVNQLRQENGEPEFANPRNAAAGTLRQLDTAVVAKRNLATFLYQEASPTQVGSQEEVLNKLADLDFSVNPTHILADSIESVWEFIEKIAEERDSLPYEIDGIVIKVNDLAVQEELGFTVKAPKWAIAYKFPAEEKEAQLLSVDWTVGRTGVVTPTANLTPVQLAGTTVSRATLHNVDYIAEKDIRQKDTVIVYKAGDIIPAVLRVVESKRVSEEALEVPSHCPSCESELVHFEDEVALRCINPLCPAQIKEGLIHFASRDAMNITGLGPAVVEKLFAQNLVKDVAGIYRLTIENLLELENFKEKSANKLYTAIQASKKNSAERLLFGLGIRHVGSKASRILLEKFHDIPRLSQASQEEIAAIDSLGTVIAQSLHTYFEQEGSQILLAELQEAGVNLDYLGQKAAADAALSGMTVVLTGKLQKLTRNQAKEKLQSLGANVSGSVSKKTDLVVAGADAGSKLAKAQELGIEIRDEDWLDSL.

Residues 29–33 (DSEYD), 78–79 (SL), and glutamate 107 contribute to the NAD(+) site. Catalysis depends on lysine 109, which acts as the N6-AMP-lysine intermediate. The NAD(+) site is built by arginine 130, glutamate 164, lysine 278, and lysine 302. Residues cysteine 395, cysteine 398, cysteine 413, and cysteine 418 each coordinate Zn(2+). One can recognise a BRCT domain in the interval 577–652 (AADAALSGMT…IRDEDWLDSL (76 aa)).

This sequence belongs to the NAD-dependent DNA ligase family. LigA subfamily. Requires Mg(2+) as cofactor. It depends on Mn(2+) as a cofactor.

The enzyme catalyses NAD(+) + (deoxyribonucleotide)n-3'-hydroxyl + 5'-phospho-(deoxyribonucleotide)m = (deoxyribonucleotide)n+m + AMP + beta-nicotinamide D-nucleotide.. DNA ligase that catalyzes the formation of phosphodiester linkages between 5'-phosphoryl and 3'-hydroxyl groups in double-stranded DNA using NAD as a coenzyme and as the energy source for the reaction. It is essential for DNA replication and repair of damaged DNA. This Streptococcus sanguinis (strain SK36) protein is DNA ligase.